The chain runs to 135 residues: Ribosome-binding factor A (135 aa).

It belongs to the RbfA family. As to quaternary structure, monomer. Binds 30S ribosomal subunits, but not 50S ribosomal subunits or 70S ribosomes.

It localises to the cytoplasm. Functionally, one of several proteins that assist in the late maturation steps of the functional core of the 30S ribosomal subunit. Associates with free 30S ribosomal subunits (but not with 30S subunits that are part of 70S ribosomes or polysomes). Required for efficient processing of 16S rRNA. May interact with the 5'-terminal helix region of 16S rRNA. This is Ribosome-binding factor A from Novosphingobium aromaticivorans (strain ATCC 700278 / DSM 12444 / CCUG 56034 / CIP 105152 / NBRC 16084 / F199).